The sequence spans 508 residues: CUGBP Elav-like family member 2 (508 aa).

2 necessary for RNA-binding, TNNT2 exon 5 and NMDA R1 exon 21 inclusion regions span residues 1 to 283 (MRCP…LQNL) and 357 to 508 (LAGM…SKPY). RRM domains lie at 40–123 (IKMF…PADS), 132–212 (RKLF…FADT), and 423–501 (ANLF…LKRS).

This sequence belongs to the CELF/BRUNOL family. Interacts with A1CF. Expressed in frontal cortex. Isoform 1 is expressed in brain and lung. Isoform 2 is expressed in heart, brain, placenta, lung, liver, kidney, skeletal muscle and pancreas. Isoform 4 is expressed in heart, lung, skeletal muscle, kidney and pancreas.

Its subcellular location is the nucleus. It is found in the cytoplasm. RNA-binding protein implicated in the regulation of several post-transcriptional events. Involved in pre-mRNA alternative splicing, mRNA translation and stability. Mediates exon inclusion and/or exclusion in pre-mRNA that are subject to tissue-specific and developmentally regulated alternative splicing. Specifically activates exon 5 inclusion of TNNT2 in embryonic, but not adult, skeletal muscle. Activates TNNT2 exon 5 inclusion by antagonizing the repressive effect of PTB. Acts both as an activator and as a repressor of a pair of coregulated exons: promotes inclusion of the smooth muscle (SM) exon but exclusion of the non-muscle (NM) exon in actinin pre-mRNAs. Promotes inclusion of exonS 21 and exclusion of exon 5 of the NMDA receptor R1 pre-mRNA. Involved in the apoB RNA editing activity. Increases COX2 mRNA stability and inhibits COX2 mRNA translation in epithelial cells after radiation injury. Modulates the cellular apoptosis program by regulating COX2-mediated prostaglandin E2 (PGE2) expression. Binds to (CUG)n triplet repeats in the 3'-UTR of transcripts such as DMPK. Binds to the muscle-specific splicing enhancer (MSE) intronic sites flanking the TNNT2 alternative exon 5. Binds preferentially to UG-rich sequences, in particular UG repeat and UGUU motifs. Binds to apoB mRNA, specifically to AU-rich sequences located immediately upstream of the edited cytidine. Binds AU-rich sequences in the 3'-UTR of COX2 mRNA. Binds to an intronic RNA element responsible for the silencing of exon 21 splicing. Binds to (CUG)n repeats. May be a specific regulator of miRNA biogenesis. Binds to primary microRNA pri-MIR140 and, with CELF1, negatively regulates the processing to mature miRNA. This is CUGBP Elav-like family member 2 (CELF2) from Homo sapiens (Human).